The sequence spans 596 residues: MHRYRSHHCAALRKCDVGIKARLSGWVHRVRDHGGILFVDLRDHFGITQIVADPASPAFKIIEKVRSEWVIRVDGEVRARSDEVINTSLPTGEIEIFAKEVEILSKSDELPLPVFGEPDYPEDIRLKYRFLDLRRETMHRNIMRRTEIIAAIRRSMQENGFTEFTTPLLTASSPEGARDFLVPSRIHQGKFYALPQAPQQYKQLLMMSGFDRYFQIAPCFRDEDPRADRLPGEFYQLDVEMSFVEQEDVLVTMEPIMRSLFEEFADGKPVTQSFPRLSYEEAMRKYGSDKPDLRNPIIMEDVSQHFYDSGFKVFAQILANDENARVWAIPAKTGGSRAFCDRMNGWAQSEGQPGLGYIFWREEQGKFEGAGPIAKNIGEQRTEALRMQLGLENGDACFFVAGDPKKFLPFAGAARTRVGEELDLVDRDCFSLAWIVDFPFFEWNEEEKKLDFAHNPFSMPQGGKDALECQDPLTLKAFQYDLVCNGYEIASGGIRNHSPEMMLKVFNLAGLSKEVVEDRFGGLYRAFHYGAPPHGGMAAGVDRIIMLLQGVKNLREVALFPMNQQALDLLMSAPSDVSPVQLRDLGIRIAPAAKND.

L-aspartate is bound at residue Glu175. Positions 199 to 202 are aspartate; sequence QQYK. L-aspartate-binding residues include Arg221 and His454. 221 to 223 is a binding site for ATP; the sequence is RDE. Glu488 is a binding site for ATP. Arg495 provides a ligand contact to L-aspartate. 540-543 lines the ATP pocket; that stretch reads GVDR.

Belongs to the class-II aminoacyl-tRNA synthetase family. Type 1 subfamily. As to quaternary structure, homodimer.

The protein localises to the cytoplasm. The catalysed reaction is tRNA(Asx) + L-aspartate + ATP = L-aspartyl-tRNA(Asx) + AMP + diphosphate. Functionally, aspartyl-tRNA synthetase with relaxed tRNA specificity since it is able to aspartylate not only its cognate tRNA(Asp) but also tRNA(Asn). Reaction proceeds in two steps: L-aspartate is first activated by ATP to form Asp-AMP and then transferred to the acceptor end of tRNA(Asp/Asn). The polypeptide is Aspartate--tRNA(Asp/Asn) ligase (Bartonella henselae (strain ATCC 49882 / DSM 28221 / CCUG 30454 / Houston 1) (Rochalimaea henselae)).